Consider the following 156-residue polypeptide: CKLF-like MARVEL transmembrane domain-containing protein 5 (156 aa).

Positions 29 to 146 (FLSSLKGILL…DAFKIYRTEL (118 aa)) constitute an MARVEL domain. Helical transmembrane passes span 35–55 (GILL…FTAS), 56–76 (ISAY…FLFL), 93–113 (LDFL…FAAV), and 119–139 (AAIA…YDAF).

This sequence belongs to the chemokine-like factor family.

The protein resides in the membrane. In Mus musculus (Mouse), this protein is CKLF-like MARVEL transmembrane domain-containing protein 5 (Cmtm5).